We begin with the raw amino-acid sequence, 425 residues long: Histone-binding protein RBBP7 (425 aa).

Ala2 carries the N-acetylalanine modification. Ser3 carries the phosphoserine modification. Residue Lys4 is modified to N6-acetyllysine; alternate. Lys4 is covalently cross-linked (Glycyl lysine isopeptide (Lys-Gly) (interchain with G-Cter in SUMO2); alternate). Lys4 participates in a covalent cross-link: Glycyl lysine isopeptide (Lys-Gly) (interchain with G-Cter in ubiquitin); alternate. Thr10 is subject to Phosphothreonine. WD repeat units lie at residues 47–122, 128–173, 181–217, 228–269, 275–312, 318–369, and 376–403; these read QWLP…KINH, RARY…LRLR, GLSW…KIVD, VVED…HLVD, VNCL…LHTF, EIFQ…LFIH, and ISDF…IWQM. Ser95 bears the Phosphoserine mark. Lys101 is covalently cross-linked (Glycyl lysine isopeptide (Lys-Gly) (interchain with G-Cter in SUMO2)). Lys119 bears the N6-acetyllysine mark. A Glycyl lysine isopeptide (Lys-Gly) (interchain with G-Cter in SUMO2) cross-link involves residue Lys155. Lys159 is subject to N6-acetyllysine; alternate. A Glycyl lysine isopeptide (Lys-Gly) (interchain with G-Cter in SUMO2); alternate cross-link involves residue Lys159. Ser354 is modified (phosphoserine).

Belongs to the WD repeat RBAP46/RBAP48/MSI1 family. Binds directly to helix 1 of the histone fold of histone H4, a region that is not accessible when H4 is in chromatin. Subunit of the type B histone acetyltransferase (HAT) complex, composed of RBBP7 and HAT1. Subunit of the core histone deacetylase (HDAC) complex, which is composed of HDAC1, HDAC2, RBBP4 and RBBP7. The core HDAC complex associates with SIN3A, ARID4B/SAP180, SAP18, SAP30, SAP130, SUDS3/SAP45 and possibly ARID4A/RBP1 and ING1 to form the SIN3 HDAC complex. Component of the nucleosome remodeling and deacetylase (NuRD) repressor complex, composed of core proteins MTA1, MTA2, MTA3, RBBP4, RBBP7, HDAC1, HDAC2, MBD2, MBD3, and peripherally associated proteins CDK2AP1, CDK2AP2, GATAD2A, GATAD2B, CHD3, CHD4 and CHD5. The exact stoichiometry of the NuRD complex is unknown, and some subunits such as MBD2 and MBD3, GATAD2A and GATAD2B, and CHD3, CHD4 and CHD5 define mutually exclusive NuRD complexes. The NuRD complex may interact with MBD3L1. The NuRD complex may interact with MBD3L2. Subunit of the PRC2/EED-EZH2 complex, which is composed of at least EED, EZH2, RBBP4, RBBP7 and SUZ12. The PRC2/EED-EZH2 complex may also associate with HDAC1. Component of the NURF-1 ISWI chromatin remodeling complex (also called the nucleosome-remodeling factor (NURF) complex) at least composed of SMARCA1, BPTF, RBBP4 and RBBP7. Within the complex interacts with SMARCA1. Component of the BPFT-SMARCA1 complex at least composed of SMARCA1, BPFT, RBBP4 and RBBP7; the complex is catalytically inactive and does not remodel chromatin. Within the complex interacts with SMARCA1. Interacts with BRCA1. Interacts with CDK2AP1. Interacts with CENPA. Interacts with CHD3. Interacts with CHD4. Interacts with CREBBP, and this interaction may be enhanced by the binding of phosphorylated CREB1 to CREBBP. Interacts with HDAC7. Interacts with MTA1. Interacts with PWWP2B. Interacts with RB1 (via viral protein-binding domain). Interacts with SUV39H1. As to expression, higher levels in brain, thymus, lung, spleen, kidney, testis, and ovary/uterus; lower levels in heart, liver, and muscle.

It is found in the nucleus. Its function is as follows. Core histone-binding subunit that may target chromatin remodeling factors, histone acetyltransferases and histone deacetylases to their histone substrates in a manner that is regulated by nucleosomal DNA. Component of several complexes which regulate chromatin metabolism. These include the type B histone acetyltransferase (HAT) complex, which is required for chromatin assembly following DNA replication; the core histone deacetylase (HDAC) complex, which promotes histone deacetylation and consequent transcriptional repression; the nucleosome remodeling and histone deacetylase complex (the NuRD complex), which promotes transcriptional repression by histone deacetylation and nucleosome remodeling; and the PRC2/EED-EZH2 complex, which promotes repression of homeotic genes during development; and the NURF (nucleosome remodeling factor) complex. This chain is Histone-binding protein RBBP7 (Rbbp7), found in Mus musculus (Mouse).